Here is a 173-residue protein sequence, read N- to C-terminus: 16S rRNA aminocarboxypropyltransferase (173 aa).

S-adenosyl-L-methionine is bound by residues Thr25, Leu72, Leu96, and Ser115.

The protein belongs to the TDD superfamily. TSR3 family.

It is found in the cytoplasm. It catalyses the reaction an N(1)-methylpseudouridine in rRNA + S-adenosyl-L-methionine = N(1)-methyl-N(3)-[(3S)-3-amino-3-carboxypropyl]pseudouridine in rRNA + S-methyl-5'-thioadenosine + H(+). Functionally, aminocarboxypropyltransferase that catalyzes the aminocarboxypropyl transfer on pseudouridine corresponding to position 914 in M.jannaschii 16S rRNA. It constitutes the last step in biosynthesis of the hypermodified N1-methyl-N3-(3-amino-3-carboxypropyl) pseudouridine (m1acp3-Psi). The chain is 16S rRNA aminocarboxypropyltransferase from Methanococcoides burtonii (strain DSM 6242 / NBRC 107633 / OCM 468 / ACE-M).